A 411-amino-acid chain; its full sequence is Elongation factor 1-gamma (411 aa).

A GST N-terminal domain is found at 3–84 (LTLWSGVNPE…HIARLDRSGG (82 aa)). Residues 90-216 (TPLEGSQVDM…QGATFGAREG (127 aa)) form the GST C-terminal domain. The disordered stretch occupies residues 212 to 265 (GAREGGAKGQGRGCARPGREEAERAAAAADGAEEEDEAPREKKKPNPLDELPPS). Residues 214-223 (REGGAKGQGR) are compositionally biased toward gly residues. The 157-residue stretch at 255–411 (KPNPLDELPP…RPVLEGRVFK (157 aa)) folds into the EF-1-gamma C-terminal domain.

In terms of assembly, EF-1 is composed of four subunits: alpha, beta, delta, and gamma.

Functionally, probably plays a role in anchoring the complex to other cellular components. The sequence is that of Elongation factor 1-gamma from Trypanosoma cruzi.